The primary structure comprises 702 residues: Polyribonucleotide nucleotidyltransferase (702 aa).

Positions 491 and 497 each coordinate Mg(2+). The 61-residue stretch at 558 to 618 (PKMKTFMIPV…TAIEKAYQLI (61 aa)) folds into the KH domain. In terms of domain architecture, S1 motif spans 628-696 (GEKIIGPVVK…GKGKIKLQLI (69 aa)).

This sequence belongs to the polyribonucleotide nucleotidyltransferase family. The cofactor is Mg(2+).

Its subcellular location is the cytoplasm. The enzyme catalyses RNA(n+1) + phosphate = RNA(n) + a ribonucleoside 5'-diphosphate. Its function is as follows. Involved in mRNA degradation. Catalyzes the phosphorolysis of single-stranded polyribonucleotides processively in the 3'- to 5'-direction. This chain is Polyribonucleotide nucleotidyltransferase, found in Spiroplasma citri.